The primary structure comprises 257 residues: 5'-nucleotidase SurE (257 aa).

A divalent metal cation is bound by residues aspartate 8, aspartate 9, serine 40, and asparagine 93.

Belongs to the SurE nucleotidase family. A divalent metal cation is required as a cofactor.

The protein localises to the cytoplasm. It catalyses the reaction a ribonucleoside 5'-phosphate + H2O = a ribonucleoside + phosphate. In terms of biological role, nucleotidase that shows phosphatase activity on nucleoside 5'-monophosphates. This Phenylobacterium zucineum (strain HLK1) protein is 5'-nucleotidase SurE.